A 187-amino-acid polypeptide reads, in one-letter code: Holliday junction branch migration complex subunit RuvA (187 aa).

Positions 1–64 are domain I; sequence MIEYVRGIIE…EDGFQIFGFK (64 aa). Positions 65 to 136 are domain II; sequence TKEELDLFEK…ELKDKLPKEI (72 aa). A flexible linker region spans residues 136–139; sequence IVFE. The domain III stretch occupies residues 140-187; that stretch reads GDNNFSNEALEALLALGYTKSEAIYALADITCDSVEDAVKQALKKLMK.

The protein belongs to the RuvA family. As to quaternary structure, homotetramer. Forms an RuvA(8)-RuvB(12)-Holliday junction (HJ) complex. HJ DNA is sandwiched between 2 RuvA tetramers; dsDNA enters through RuvA and exits via RuvB. An RuvB hexamer assembles on each DNA strand where it exits the tetramer. Each RuvB hexamer is contacted by two RuvA subunits (via domain III) on 2 adjacent RuvB subunits; this complex drives branch migration. In the full resolvosome a probable DNA-RuvA(4)-RuvB(12)-RuvC(2) complex forms which resolves the HJ.

The protein resides in the cytoplasm. The RuvA-RuvB-RuvC complex processes Holliday junction (HJ) DNA during genetic recombination and DNA repair, while the RuvA-RuvB complex plays an important role in the rescue of blocked DNA replication forks via replication fork reversal (RFR). RuvA specifically binds to HJ cruciform DNA, conferring on it an open structure. The RuvB hexamer acts as an ATP-dependent pump, pulling dsDNA into and through the RuvAB complex. HJ branch migration allows RuvC to scan DNA until it finds its consensus sequence, where it cleaves and resolves the cruciform DNA. The sequence is that of Holliday junction branch migration complex subunit RuvA from Thermoanaerobacter pseudethanolicus (strain ATCC 33223 / 39E) (Clostridium thermohydrosulfuricum).